We begin with the raw amino-acid sequence, 1074 residues long: Transmembrane protein 132E (1074 aa).

The signal sequence occupies residues 1-25 (MAPGMSGRGGAALLCLSALLAHASG). Residues 26–893 (RSHPASPSPP…LTDLEIGMYA (868 aa)) are Extracellular-facing. Residues Asn70 and Asn91 are each glycosylated (N-linked (GlcNAc...) asparagine). 2 disordered regions span residues 202–226 (PPAP…ATGE) and 241–264 (ASGG…ESPT). Over residues 243 to 256 (GGCGGSRRGAGPGV) the composition is skewed to gly residues. 2 N-linked (GlcNAc...) asparagine glycosylation sites follow: Asn318 and Asn399. 2 disordered regions span residues 563–585 (RSVR…ASRG) and 814–867 (GRDE…VPPT). Low complexity predominate over residues 841–862 (GAGPPGSALPAPEAPGPGTASP). Residues 894 to 914 (LLGVFCLAILVFLINCIVFVL) traverse the membrane as a helical segment. The Cytoplasmic portion of the chain corresponds to 915–1074 (RYRHKRIPPE…NYMRRIKEIA (160 aa)). The segment at 946–1063 (VQGELSPPAG…PTRPTAPPDL (118 aa)) is disordered. The segment covering 972–984 (SGSSQTSVQSQVH) has biased composition (low complexity). Residues 1034–1044 (GEEDEEEEEDL) are compositionally biased toward acidic residues.

It belongs to the TMEM132 family.

Its subcellular location is the membrane. Functionally, required for normal inner ear hair cell function and hearing. This is Transmembrane protein 132E from Homo sapiens (Human).